A 186-amino-acid chain; its full sequence is Quinone reductase (186 aa).

FMN contacts are provided by residues 13-20 (SLRKESYN), 80-83 (EYNR), and serine 116.

This sequence belongs to the SsuE family. In terms of assembly, homotetramer. Dimer of dimers. The tetrameric configuration has a central role in chromate reductase activity. It depends on FMN as a cofactor.

It carries out the reaction a quinone + NADH + H(+) = a quinol + NAD(+). The enzyme catalyses a quinone + NADPH + H(+) = a quinol + NADP(+). The catalysed reaction is Cr(6+) + 2 NADH + O2 = Cr(3+) + superoxide + 2 NAD(+) + 2 H(+). It catalyses the reaction Cr(6+) + 2 NADPH + O2 = Cr(3+) + superoxide + 2 NADP(+) + 2 H(+). May be inhibited by divalent cations. In terms of biological role, catalyzes the reduction of quinones. Acts by simultaneous two-electron transfer, avoiding formation of highly reactive semiquinone intermediates and producing quinols that promote tolerance of H(2)O(2). Quinone reduction is probably the primary biological role of ChrR. Can also reduce toxic chromate to insoluble and less toxic Cr(3+). Catalyzes the transfer of three electrons to Cr(6+) producing Cr(3+) and one electron to molecular oxygen. This reaction produces transiently a minimal amount of the toxic Cr(5+) species and reactive oxygen species (ROS). Chromate reduction protects the cell against chromate toxicity, but is likely a secondary activity. Can also reduce potassium ferricyanide and 2,6-dichloroindophenol. During chromate reduction, displays an eightfold preference for NADH over NADPH. In Pseudomonas putida (strain ATCC 47054 / DSM 6125 / CFBP 8728 / NCIMB 11950 / KT2440), this protein is Quinone reductase.